A 945-amino-acid chain; its full sequence is Isoleucine--tRNA ligase (945 aa).

The 'HIGH' region motif lies at 66–76 (PYANGDIHLGH). Glutamate 581 is a binding site for L-isoleucyl-5'-AMP. Residues 622 to 626 (KMSKS) carry the 'KMSKS' region motif. Lysine 625 is an ATP binding site. Cysteine 908, cysteine 911, cysteine 928, and cysteine 931 together coordinate Zn(2+).

The protein belongs to the class-I aminoacyl-tRNA synthetase family. IleS type 1 subfamily. In terms of assembly, monomer. It depends on Zn(2+) as a cofactor.

The protein resides in the cytoplasm. It carries out the reaction tRNA(Ile) + L-isoleucine + ATP = L-isoleucyl-tRNA(Ile) + AMP + diphosphate. In terms of biological role, catalyzes the attachment of isoleucine to tRNA(Ile). As IleRS can inadvertently accommodate and process structurally similar amino acids such as valine, to avoid such errors it has two additional distinct tRNA(Ile)-dependent editing activities. One activity is designated as 'pretransfer' editing and involves the hydrolysis of activated Val-AMP. The other activity is designated 'posttransfer' editing and involves deacylation of mischarged Val-tRNA(Ile). The chain is Isoleucine--tRNA ligase from Paraburkholderia phytofirmans (strain DSM 17436 / LMG 22146 / PsJN) (Burkholderia phytofirmans).